Reading from the N-terminus, the 461-residue chain is Cysteine--tRNA ligase (461 aa).

Cys-28 is a Zn(2+) binding site. The short motif at 30 to 40 (ITVYDLCHIGH) is the 'HIGH' region element. 3 residues coordinate Zn(2+): Cys-209, His-234, and Glu-238. A 'KMSKS' region motif is present at residues 266 to 270 (KMSKS). Lys-269 is a binding site for ATP.

It belongs to the class-I aminoacyl-tRNA synthetase family. As to quaternary structure, monomer. Zn(2+) serves as cofactor.

The protein resides in the cytoplasm. The catalysed reaction is tRNA(Cys) + L-cysteine + ATP = L-cysteinyl-tRNA(Cys) + AMP + diphosphate. In Klebsiella pneumoniae (strain 342), this protein is Cysteine--tRNA ligase.